The sequence spans 822 residues: Probable RING finger protein 207 homolog (822 aa).

The RING-type zinc finger occupies 8 to 42 (CTICKNEFEEPILLSCQHTTCRKCSTGSPSCKSCS). The B box-type 1; atypical zinc-finger motif lies at 68–115 (EEMEECANCEQISLPMFYCETCQQSLCLVCRNVTHQARMFSSHKIISS). Cys73, Cys76, Cys97, and His102 together coordinate Zn(2+). The B box-type 2; degenerate zinc finger occupies 122-164 (YSSSLCKDHNEPYILYCSDVRKLVCIQCFNGRPLEERHSFISI). 2 coiled-coil regions span residues 526-558 (NSQN…GQSA) and 738-769 (DKDE…KVSE).

This chain is Probable RING finger protein 207 homolog, found in Caenorhabditis elegans.